Here is a 190-residue protein sequence, read N- to C-terminus: Putative manganese efflux pump MntP (190 aa).

6 helical membrane passes run 3-23 (FLQI…CSVV), 37-57 (LVLA…GWFI), 72-88 (HWIA…KMIW), 111-131 (IILG…LAFV), 138-158 (VALS…WIGH), and 164-184 (FGKW…ANIV).

This sequence belongs to the MntP (TC 9.B.29) family.

It is found in the cell membrane. Probably functions as a manganese efflux pump. The chain is Putative manganese efflux pump MntP from Corynebacterium glutamicum (strain ATCC 13032 / DSM 20300 / JCM 1318 / BCRC 11384 / CCUG 27702 / LMG 3730 / NBRC 12168 / NCIMB 10025 / NRRL B-2784 / 534).